We begin with the raw amino-acid sequence, 225 residues long: UPF0758 protein Sputw3181_0338 (225 aa).

One can recognise an MPN domain in the interval 102 to 224 (VLTNPDLTRD…IVSFAERGWI (123 aa)). Residues His173, His175, and Asp186 each coordinate Zn(2+). The short motif at 173–186 (HNHPSGIAEPSQAD) is the JAMM motif element.

It belongs to the UPF0758 family.

In Shewanella sp. (strain W3-18-1), this protein is UPF0758 protein Sputw3181_0338.